The following is a 482-amino-acid chain: Zinc finger protein 385B (482 aa).

The interval 1–105 is required for induction of apoptosis; that stretch reads MNMATFLRGF…TGSACHTTTL (105 aa). Matrin-type zinc fingers lie at residues 34–64 and 169–199; these read SFCE…RVKQ and ISCN…KVKA. Disordered regions lie at residues 54–75, 189–259, and 268–287; these read DGKS…PPVQ, KGSK…SFLL, and LGAI…SVAE. Residues 106–482 form an interaction with p53/TP53 region; that stretch reads PALVRTPTLM…TPASILFAPY (377 aa). A compositionally biased stretch (basic and acidic residues) spans 231-240; it reads SSDKSEDKGK. A Matrin-type 3 zinc finger spans residues 294 to 328; sequence KKLLYCSLCKVAVNSLSQLEAHNTGSKHKTMVEAR. Disordered stretches follow at residues 331 to 352 and 378 to 397; these read AGPI…GSKG and HISS…KPKY. The Matrin-type 4 zinc finger occupies 360 to 390; sequence FHCEICDVHVNSEIQLKQHISSRRHKDRVAG.

In terms of assembly, interacts with p53/TP53; the interaction is direct.

The protein resides in the nucleus. Its function is as follows. May play a role in p53/TP53-mediated apoptosis. This is Zinc finger protein 385B (Znf385b) from Mus musculus (Mouse).